A 419-amino-acid polypeptide reads, in one-letter code: S-adenosylmethionine synthase (419 aa).

ATP is bound at residue H15. D17 serves as a coordination point for Mg(2+). E43 is a K(+) binding site. L-methionine is bound by residues E56 and Q100. The tract at residues 100 to 110 (QSPDIAQGVNE) is flexible loop. ATP-binding positions include 171–173 (DGK), 248–249 (KF), D257, 263–264 (RK), A280, and K284. D257 contributes to the L-methionine binding site. Residue K288 participates in L-methionine binding.

Belongs to the AdoMet synthase family. As to quaternary structure, homotetramer; dimer of dimers. Mg(2+) is required as a cofactor. It depends on K(+) as a cofactor.

Its subcellular location is the cytoplasm. It carries out the reaction L-methionine + ATP + H2O = S-adenosyl-L-methionine + phosphate + diphosphate. It participates in amino-acid biosynthesis; S-adenosyl-L-methionine biosynthesis; S-adenosyl-L-methionine from L-methionine: step 1/1. Catalyzes the formation of S-adenosylmethionine (AdoMet) from methionine and ATP. The overall synthetic reaction is composed of two sequential steps, AdoMet formation and the subsequent tripolyphosphate hydrolysis which occurs prior to release of AdoMet from the enzyme. The chain is S-adenosylmethionine synthase from Prochlorococcus marinus (strain MIT 9303).